The chain runs to 168 residues: Troponin I, cardiac muscle (168 aa).

The span at Val128–Val147 shows a compositional bias: basic and acidic residues. Residues Val128 to Gly168 are disordered.

The protein belongs to the troponin I family. As to quaternary structure, binds to actin and tropomyosin.

Troponin I is the inhibitory subunit of troponin, the thin filament regulatory complex which confers calcium-sensitivity to striated muscle actomyosin ATPase activity. The sequence is that of Troponin I, cardiac muscle (TNNI3) from Gallus gallus (Chicken).